A 663-amino-acid chain; its full sequence is DNA ligase (663 aa).

Residues 33–37 (DYSYD), 82–83 (SI), and Glu-112 contribute to the NAD(+) site. Catalysis depends on Lys-114, which acts as the N6-AMP-lysine intermediate. NAD(+) contacts are provided by Arg-135, Glu-171, Lys-285, and Lys-309. Cys-403, Cys-406, Cys-419, and Cys-424 together coordinate Zn(2+). In terms of domain architecture, BRCT spans 581–663 (DKEAPLQGKV…SRILDAKSVS (83 aa)).

Belongs to the NAD-dependent DNA ligase family. LigA subfamily. Mg(2+) serves as cofactor. The cofactor is Mn(2+).

It catalyses the reaction NAD(+) + (deoxyribonucleotide)n-3'-hydroxyl + 5'-phospho-(deoxyribonucleotide)m = (deoxyribonucleotide)n+m + AMP + beta-nicotinamide D-nucleotide.. Functionally, DNA ligase that catalyzes the formation of phosphodiester linkages between 5'-phosphoryl and 3'-hydroxyl groups in double-stranded DNA using NAD as a coenzyme and as the energy source for the reaction. It is essential for DNA replication and repair of damaged DNA. This is DNA ligase from Chlamydia trachomatis serovar L2 (strain ATCC VR-902B / DSM 19102 / 434/Bu).